Reading from the N-terminus, the 890-residue chain is Alanine--tRNA ligase (890 aa).

Zn(2+) is bound by residues histidine 572, histidine 576, cysteine 674, and histidine 678.

The protein belongs to the class-II aminoacyl-tRNA synthetase family. Requires Zn(2+) as cofactor.

The protein localises to the cytoplasm. The enzyme catalyses tRNA(Ala) + L-alanine + ATP = L-alanyl-tRNA(Ala) + AMP + diphosphate. Its function is as follows. Catalyzes the attachment of alanine to tRNA(Ala) in a two-step reaction: alanine is first activated by ATP to form Ala-AMP and then transferred to the acceptor end of tRNA(Ala). Also edits incorrectly charged Ser-tRNA(Ala) and Gly-tRNA(Ala) via its editing domain. This Prochlorococcus marinus (strain MIT 9211) protein is Alanine--tRNA ligase.